The chain runs to 189 residues: Glycerol-3-phosphate acyltransferase (189 aa).

The next 4 membrane-spanning stretches (helical) occupy residues 1–21, 79–99, 113–133, and 151–171; these read MVWL…AILL, QQAW…YFNF, LGLY…VFAF, and LLAW…GVIV.

It belongs to the PlsY family. Probably interacts with PlsX.

It is found in the cell inner membrane. The catalysed reaction is an acyl phosphate + sn-glycerol 3-phosphate = a 1-acyl-sn-glycero-3-phosphate + phosphate. Its pathway is lipid metabolism; phospholipid metabolism. Catalyzes the transfer of an acyl group from acyl-phosphate (acyl-PO(4)) to glycerol-3-phosphate (G3P) to form lysophosphatidic acid (LPA). This enzyme utilizes acyl-phosphate as fatty acyl donor, but not acyl-CoA or acyl-ACP. This is Glycerol-3-phosphate acyltransferase from Azotobacter vinelandii (strain DJ / ATCC BAA-1303).